The primary structure comprises 376 residues: WW domain-binding protein 4 (376 aa).

The Matrin-type zinc-finger motif lies at lysine 11–arginine 42. Residues proline 94–glutamine 111 show a composition bias toward polar residues. Disordered stretches follow at residues proline 94–glycine 127 and tryptophan 192–serine 324. A compositionally biased stretch (basic residues) spans glutamate 114 to glutamate 123. WW domains follow at residues glutamate 123–glycine 156 and threonine 164–aspartate 197. Residues glutamate 219–threonine 272 show a composition bias toward basic and acidic residues. Phosphoserine is present on residues serine 228 and serine 230. Residues lysine 357–aspartate 375 form an interaction with SNRNP200 region.

In terms of assembly, component of the spliceosome B complex. Associated with U2 snRNPs. Binds splicing factors SNRPB, SNRPC and SF1. Interacts via the WW domains with the Pro-rich domains of KHDRBS1/SAM68. Interacts via the WW domains with the Pro-rich domains of WBP11. Interacts with SNRNP200.

The protein localises to the nucleus. It is found in the nucleus speckle. Involved in pre-mRNA splicing as a component of the spliceosome. May play a role in cross-intron bridging of U1 and U2 snRNPs in the mammalian A complex. This chain is WW domain-binding protein 4 (Wbp4), found in Mus musculus (Mouse).